The primary structure comprises 328 residues: Ribosomal RNA large subunit methyltransferase F (328 aa).

The tract at residues 1–31 (MTDTRKPPRKKPQRPAKPAAPREKATLHPRN) is disordered.

This sequence belongs to the methyltransferase superfamily. METTL16/RlmF family.

The protein resides in the cytoplasm. It carries out the reaction adenosine(1618) in 23S rRNA + S-adenosyl-L-methionine = N(6)-methyladenosine(1618) in 23S rRNA + S-adenosyl-L-homocysteine + H(+). In terms of biological role, specifically methylates the adenine in position 1618 of 23S rRNA. In Pseudomonas syringae pv. syringae (strain B728a), this protein is Ribosomal RNA large subunit methyltransferase F.